Here is a 209-residue protein sequence, read N- to C-terminus: Uracil phosphoribosyltransferase (209 aa).

5-phospho-alpha-D-ribose 1-diphosphate-binding positions include R79, R104, and 131–139 (DPMLATGGS). Uracil is bound by residues I194 and 199-201 (GDA). D200 serves as a coordination point for 5-phospho-alpha-D-ribose 1-diphosphate.

This sequence belongs to the UPRTase family. Mg(2+) is required as a cofactor.

It carries out the reaction UMP + diphosphate = 5-phospho-alpha-D-ribose 1-diphosphate + uracil. It participates in pyrimidine metabolism; UMP biosynthesis via salvage pathway; UMP from uracil: step 1/1. With respect to regulation, allosterically activated by GTP. In terms of biological role, catalyzes the conversion of uracil and 5-phospho-alpha-D-ribose 1-diphosphate (PRPP) to UMP and diphosphate. In Chromohalobacter salexigens (strain ATCC BAA-138 / DSM 3043 / CIP 106854 / NCIMB 13768 / 1H11), this protein is Uracil phosphoribosyltransferase.